A 270-amino-acid polypeptide reads, in one-letter code: UPF0354 protein BCAH820_4810 (270 aa).

This sequence belongs to the UPF0354 family.

The chain is UPF0354 protein BCAH820_4810 from Bacillus cereus (strain AH820).